The chain runs to 149 residues: Nucleoside diphosphate kinase (149 aa).

ATP contacts are provided by Lys9, Phe57, Arg85, Thr91, Arg102, and Asn112. His115 acts as the Pros-phosphohistidine intermediate in catalysis.

It belongs to the NDK family. In terms of assembly, homotetramer. Mg(2+) serves as cofactor.

The protein localises to the cytoplasm. It carries out the reaction a 2'-deoxyribonucleoside 5'-diphosphate + ATP = a 2'-deoxyribonucleoside 5'-triphosphate + ADP. It catalyses the reaction a ribonucleoside 5'-diphosphate + ATP = a ribonucleoside 5'-triphosphate + ADP. Functionally, major role in the synthesis of nucleoside triphosphates other than ATP. The ATP gamma phosphate is transferred to the NDP beta phosphate via a ping-pong mechanism, using a phosphorylated active-site intermediate. The polypeptide is Nucleoside diphosphate kinase (Staphylococcus haemolyticus (strain JCSC1435)).